We begin with the raw amino-acid sequence, 323 residues long: uncharacterized protein (323 aa).

A helical membrane pass occupies residues 4 to 24 (IIFAFIILFVFLLPMIIFYQP).

Its subcellular location is the membrane. This is an uncharacterized protein from Escherichia coli (strain K12).